We begin with the raw amino-acid sequence, 637 residues long: Extracellular metalloproteinase 10 (637 aa).

Positions 1-19 are cleaved as a signal peptide; that stretch reads MHGLLLAATLLSLPFNAVA. A propeptide spanning residues 20 to 245 is cleaved from the precursor; the sequence is HVPPTTGLVR…VHNVVDYVAH (226 aa). A glycan (N-linked (GlcNAc...) asparagine) is linked at N282. Position 429 (H429) interacts with Zn(2+). E430 is a catalytic residue. H433 is a binding site for Zn(2+). N502 carries N-linked (GlcNAc...) asparagine glycosylation.

This sequence belongs to the peptidase M36 family. Zn(2+) serves as cofactor.

The protein resides in the secreted. Functionally, secreted metalloproteinase that allows assimilation of proteinaceous substrates. This Uncinocarpus reesii (strain UAMH 1704) protein is Extracellular metalloproteinase 10 (MEP10).